We begin with the raw amino-acid sequence, 105 residues long: MFSTTTNNIEGHPVREYLGIVTGEVIVGANLFRDLFASITDIVGGRSGKYEDVLARARKEALGEMEAEAAKLGGNAVIGVDIDYEVLGQNGSMLMVSASGTAVVI.

This sequence belongs to the UPF0145 family.

The polypeptide is UPF0145 protein Sala_0338 (Sphingopyxis alaskensis (strain DSM 13593 / LMG 18877 / RB2256) (Sphingomonas alaskensis)).